The following is a 29-amino-acid chain: GLPVCGETCAFGSCYTPGCSCSWPVCTRN.

The cyclopeptide (Gly-Asn) cross-link spans 1 to 29 (GLPVCGETCAFGSCYTPGCSCSWPVCTRN). 3 disulfides stabilise this stretch: cysteine 5–cysteine 19, cysteine 9–cysteine 21, and cysteine 14–cysteine 26.

In terms of processing, this is a cyclic peptide.

In terms of biological role, probably participates in a plant defense mechanism. The sequence is that of Cyclotide vibi-C from Viola biflora (Yellow wood violet).